The following is a 391-amino-acid chain: Succinate--CoA ligase [ADP-forming] subunit beta (391 aa).

The region spanning 9–248 (KDILRKFGVA…ITEEDPFEVE (240 aa)) is the ATP-grasp domain. ATP is bound by residues lysine 50, 57 to 59 (GRG), glutamate 103, methionine 106, and glutamate 111. Mg(2+) contacts are provided by asparagine 203 and aspartate 217. Substrate is bound by residues asparagine 268 and 325–327 (GIV).

The protein belongs to the succinate/malate CoA ligase beta subunit family. As to quaternary structure, heterotetramer of two alpha and two beta subunits. It depends on Mg(2+) as a cofactor.

It carries out the reaction succinate + ATP + CoA = succinyl-CoA + ADP + phosphate. The enzyme catalyses GTP + succinate + CoA = succinyl-CoA + GDP + phosphate. The protein operates within carbohydrate metabolism; tricarboxylic acid cycle; succinate from succinyl-CoA (ligase route): step 1/1. In terms of biological role, succinyl-CoA synthetase functions in the citric acid cycle (TCA), coupling the hydrolysis of succinyl-CoA to the synthesis of either ATP or GTP and thus represents the only step of substrate-level phosphorylation in the TCA. The beta subunit provides nucleotide specificity of the enzyme and binds the substrate succinate, while the binding sites for coenzyme A and phosphate are found in the alpha subunit. The protein is Succinate--CoA ligase [ADP-forming] subunit beta of Chlorobium phaeovibrioides (strain DSM 265 / 1930) (Prosthecochloris vibrioformis (strain DSM 265)).